A 104-amino-acid chain; its full sequence is Thioredoxin (104 aa).

A Thioredoxin domain is found at 2-104 (KQVSDASFEE…KLFEWVEASV (103 aa)). Cys29 and Cys32 are oxidised to a cystine.

This sequence belongs to the thioredoxin family.

Functionally, participates in various redox reactions through the reversible oxidation of its active center dithiol to a disulfide and catalyzes dithiol-disulfide exchange reactions. The chain is Thioredoxin (trxA) from Rhodospirillum rubrum.